The following is a 913-amino-acid chain: Alanine--tRNA ligase (913 aa).

Residues His608, His612, Cys711, and His715 each contribute to the Zn(2+) site.

It belongs to the class-II aminoacyl-tRNA synthetase family. Zn(2+) is required as a cofactor.

It localises to the cytoplasm. The catalysed reaction is tRNA(Ala) + L-alanine + ATP = L-alanyl-tRNA(Ala) + AMP + diphosphate. Catalyzes the attachment of alanine to tRNA(Ala) in a two-step reaction: alanine is first activated by ATP to form Ala-AMP and then transferred to the acceptor end of tRNA(Ala). Also edits incorrectly charged Ser-tRNA(Ala) and Gly-tRNA(Ala) via its editing domain. This Methanocorpusculum labreanum (strain ATCC 43576 / DSM 4855 / Z) protein is Alanine--tRNA ligase.